A 403-amino-acid chain; its full sequence is F-box/LRR-repeat protein At1g06630 (403 aa).

The 49-residue stretch at 11–59 (RDAINWLPDEILGKILSLLATKQAVSTSVLSKKWRTLFKLVDTLEFDDS) folds into the F-box domain. 2 LRR repeats span residues 239-262 (LPNL…NLES) and 288-312 (IRNV…KYGL).

The protein is F-box/LRR-repeat protein At1g06630 of Arabidopsis thaliana (Mouse-ear cress).